A 117-amino-acid chain; its full sequence is Large ribosomal subunit protein bL20 (117 aa).

The protein belongs to the bacterial ribosomal protein bL20 family.

In terms of biological role, binds directly to 23S ribosomal RNA and is necessary for the in vitro assembly process of the 50S ribosomal subunit. It is not involved in the protein synthesizing functions of that subunit. This is Large ribosomal subunit protein bL20 from Geobacter sulfurreducens (strain ATCC 51573 / DSM 12127 / PCA).